We begin with the raw amino-acid sequence, 228 residues long: FAS1 domain-containing protein NCU02579 (228 aa).

The signal sequence occupies residues 1 to 18; it reads MRFTPYLVLAPTAAVAFA. Residues 50–74 form a disordered region; that stretch reads PAVGLGPAMPPSGAPQADGPANAGG. Residues 77-225 enclose the FAS1 domain; sequence SVMLSDVMGR…GEVWILKGVR (149 aa).

Its subcellular location is the vacuole. The sequence is that of FAS1 domain-containing protein NCU02579 from Neurospora crassa (strain ATCC 24698 / 74-OR23-1A / CBS 708.71 / DSM 1257 / FGSC 987).